Consider the following 751-residue polypeptide: Photosystem I P700 chlorophyll a apoprotein A1 (751 aa).

The next 8 helical transmembrane spans lie at 73 to 96 (VFSA…FHGA), 159 to 182 (LYTT…FHYH), 198 to 222 (LNHH…HVSL), 294 to 312 (TAHH…GHMY), 349 to 372 (WHAQ…HHMY), 388 to 414 (LSLF…IFMV), 436 to 458 (AIIS…LYIH), and 533 to 551 (FLVH…LILL). [4Fe-4S] cluster is bound by residues C575 and C584. Helical transmembrane passes span 591–612 (HVFL…HFSW) and 665–687 (LSAY…MFLF). H676 contributes to the chlorophyll a' binding site. M684 and Y692 together coordinate chlorophyll a. A phylloquinone-binding site is contributed by W693. Residues 725-745 (AVGVAHYLLGGIATTWSFFLA) form a helical membrane-spanning segment.

Belongs to the PsaA/PsaB family. In terms of assembly, the PsaA/B heterodimer binds the P700 chlorophyll special pair and subsequent electron acceptors. PSI consists of a core antenna complex that captures photons, and an electron transfer chain that converts photonic excitation into a charge separation. The eukaryotic PSI reaction center is composed of at least 11 subunits. The cofactor is P700 is a chlorophyll a/chlorophyll a' dimer, A0 is one or more chlorophyll a, A1 is one or both phylloquinones and FX is a shared 4Fe-4S iron-sulfur center..

It is found in the plastid. The protein resides in the chloroplast thylakoid membrane. It catalyses the reaction reduced [plastocyanin] + hnu + oxidized [2Fe-2S]-[ferredoxin] = oxidized [plastocyanin] + reduced [2Fe-2S]-[ferredoxin]. In terms of biological role, psaA and PsaB bind P700, the primary electron donor of photosystem I (PSI), as well as the electron acceptors A0, A1 and FX. PSI is a plastocyanin/cytochrome c6-ferredoxin oxidoreductase, converting photonic excitation into a charge separation, which transfers an electron from the donor P700 chlorophyll pair to the spectroscopically characterized acceptors A0, A1, FX, FA and FB in turn. Oxidized P700 is reduced on the lumenal side of the thylakoid membrane by plastocyanin or cytochrome c6. The chain is Photosystem I P700 chlorophyll a apoprotein A1 from Tetradesmus obliquus (Green alga).